The following is a 324-amino-acid chain: NADH-dependent D-xylose reductase (324 aa).

Residue Tyr54 is the Proton donor of the active site. His116 lines the substrate pocket. 220-286 (SSFGPQSFLE…SNSPDRMAQN (67 aa)) is a binding site for NAD(+).

The protein belongs to the aldo/keto reductase family.

It carries out the reaction xylitol + NAD(+) = D-xylose + NADH + H(+). The enzyme catalyses xylitol + NADP(+) = D-xylose + NADPH + H(+). The protein operates within carbohydrate metabolism; D-xylose degradation. Reduces D-xylose into xylitol. Preferentially utilizes NADH as a cosubstrate. The chain is NADH-dependent D-xylose reductase (XYL1) from Candida parapsilosis (Yeast).